The following is a 230-amino-acid chain: Orotidine 5'-phosphate decarboxylase (230 aa).

Residues aspartate 11, lysine 34, 61–70 (DLKLHDIPNT), threonine 117, arginine 179, glutamine 188, glycine 208, and arginine 209 each bind substrate. Lysine 63 serves as the catalytic Proton donor.

Belongs to the OMP decarboxylase family. Type 1 subfamily. As to quaternary structure, homodimer.

It carries out the reaction orotidine 5'-phosphate + H(+) = UMP + CO2. It functions in the pathway pyrimidine metabolism; UMP biosynthesis via de novo pathway; UMP from orotate: step 2/2. Catalyzes the decarboxylation of orotidine 5'-monophosphate (OMP) to uridine 5'-monophosphate (UMP). The protein is Orotidine 5'-phosphate decarboxylase of Streptococcus gordonii (strain Challis / ATCC 35105 / BCRC 15272 / CH1 / DL1 / V288).